A 249-amino-acid chain; its full sequence is Probable amino-acid import ATP-binding protein YxeO (249 aa).

The ABC transporter domain occupies 2 to 239; it reads ITVKNIRKAF…PKNERTKRFI (238 aa). 34-41 serves as a coordination point for ATP; the sequence is GPSGSGKS.

The protein belongs to the ABC transporter superfamily. As to quaternary structure, the complex is composed of two ATP-binding proteins (YxeO), two transmembrane proteins (YxeN) and a solute-binding protein (YxeM).

The protein localises to the cell membrane. In terms of biological role, probably part of the ABC transporter complex YxeMNO that could be involved in amino-acid import. May transport S-methylcysteine. Responsible for energy coupling to the transport system. The protein is Probable amino-acid import ATP-binding protein YxeO (yxeO) of Bacillus subtilis (strain 168).